An 827-amino-acid chain; its full sequence is Periplasmic nitrate reductase (827 aa).

The segment at residues 1–32 (MELNRRDFMKANAAMAAAAAAGMTIPVKNVYA) is a signal peptide (tat-type signal). The 4Fe-4S Mo/W bis-MGD-type domain occupies 37 to 93 (IRWDKAPCRFCGTGCSVLVGTKDGRVVATQGDPDAEVNRGLNCIKGYFLSKIMYGAD). 4 residues coordinate [4Fe-4S] cluster: Cys-44, Cys-47, Cys-51, and Cys-79. Residues Lys-81, Gln-148, Asn-173, Cys-177, 210–217 (WGSNMAEM), 241–245 (STFEH), Met-371, Gln-375, Asn-481, 507–508 (SD), Lys-530, Asp-557, and 717–726 (TGRVLEHWHT) contribute to the Mo-bis(molybdopterin guanine dinucleotide) site. Phe-793 lines the substrate pocket. Residues Asn-801 and Lys-818 each contribute to the Mo-bis(molybdopterin guanine dinucleotide) site.

The protein belongs to the prokaryotic molybdopterin-containing oxidoreductase family. NasA/NapA/NarB subfamily. As to quaternary structure, component of the periplasmic nitrate reductase NapAB complex composed of NapA and NapB. It depends on [4Fe-4S] cluster as a cofactor. Mo-bis(molybdopterin guanine dinucleotide) is required as a cofactor. Predicted to be exported by the Tat system. The position of the signal peptide cleavage has not been experimentally proven.

The protein resides in the periplasm. It catalyses the reaction 2 Fe(II)-[cytochrome] + nitrate + 2 H(+) = 2 Fe(III)-[cytochrome] + nitrite + H2O. Functionally, catalytic subunit of the periplasmic nitrate reductase complex NapAB. Receives electrons from NapB and catalyzes the reduction of nitrate to nitrite. This chain is Periplasmic nitrate reductase, found in Actinobacillus pleuropneumoniae serotype 7 (strain AP76).